The following is a 208-amino-acid chain: FMN-dependent NADH:quinone oxidoreductase (208 aa).

FMN-binding positions include Ser-17–Ser-19, Met-99–Leu-102, and Ser-143–Gly-146.

This sequence belongs to the azoreductase type 1 family. As to quaternary structure, homodimer. Requires FMN as cofactor.

It catalyses the reaction 2 a quinone + NADH + H(+) = 2 a 1,4-benzosemiquinone + NAD(+). It carries out the reaction N,N-dimethyl-1,4-phenylenediamine + anthranilate + 2 NAD(+) = 2-(4-dimethylaminophenyl)diazenylbenzoate + 2 NADH + 2 H(+). In terms of biological role, quinone reductase that provides resistance to thiol-specific stress caused by electrophilic quinones. Functionally, also exhibits azoreductase activity. Catalyzes the reductive cleavage of the azo bond in aromatic azo compounds to the corresponding amines. The protein is FMN-dependent NADH:quinone oxidoreductase of Staphylococcus aureus (strain COL).